The chain runs to 100 residues: NADH-quinone oxidoreductase subunit K (100 aa).

3 helical membrane-spanning segments follow: residues leucine 4 to isoleucine 24, leucine 28 to valine 48, and valine 60 to leucine 80.

This sequence belongs to the complex I subunit 4L family. In terms of assembly, NDH-1 is composed of 13 different subunits. Subunits NuoA, H, J, K, L, M, N constitute the membrane sector of the complex.

It is found in the cell inner membrane. The enzyme catalyses a quinone + NADH + 5 H(+)(in) = a quinol + NAD(+) + 4 H(+)(out). In terms of biological role, NDH-1 shuttles electrons from NADH, via FMN and iron-sulfur (Fe-S) centers, to quinones in the respiratory chain. The immediate electron acceptor for the enzyme in this species is believed to be ubiquinone. Couples the redox reaction to proton translocation (for every two electrons transferred, four hydrogen ions are translocated across the cytoplasmic membrane), and thus conserves the redox energy in a proton gradient. The sequence is that of NADH-quinone oxidoreductase subunit K from Pectobacterium carotovorum subsp. carotovorum (strain PC1).